The chain runs to 420 residues: UDP-N-acetylglucosamine 1-carboxyvinyltransferase (420 aa).

Phosphoenolpyruvate is bound at residue 22–23; it reads KN. Arginine 93 serves as a coordination point for UDP-N-acetyl-alpha-D-glucosamine. Cysteine 117 acts as the Proton donor in catalysis. Cysteine 117 is subject to 2-(S-cysteinyl)pyruvic acid O-phosphothioketal. UDP-N-acetyl-alpha-D-glucosamine-binding positions include 162–165, aspartate 307, and isoleucine 329; that span reads KVSV.

It belongs to the EPSP synthase family. MurA subfamily.

The protein resides in the cytoplasm. It carries out the reaction phosphoenolpyruvate + UDP-N-acetyl-alpha-D-glucosamine = UDP-N-acetyl-3-O-(1-carboxyvinyl)-alpha-D-glucosamine + phosphate. Its pathway is cell wall biogenesis; peptidoglycan biosynthesis. Its function is as follows. Cell wall formation. Adds enolpyruvyl to UDP-N-acetylglucosamine. This chain is UDP-N-acetylglucosamine 1-carboxyvinyltransferase, found in Actinobacillus succinogenes (strain ATCC 55618 / DSM 22257 / CCUG 43843 / 130Z).